A 152-amino-acid polypeptide reads, in one-letter code: SXP/RAL-2 family protein Ani s 5 (152 aa).

The N-terminal stretch at 1-18 (MKTLIVAALFCTIGMALA) is a signal peptide. Necessary for IgE-binding regions lie at residues 25-42 (PPFL…FFEL), 49-54 (KTDPEI), 58-66 (LDAWVDTLG), and 103-120 (KKAD…SLNG). IgG4-binding regions lie at residues 49–68 (KTDP…LGGD) and 118–137 (LNGI…LPQS). The tract at residues 127-146 (IQAIYKTLPQSVKDELEKGI) is igE-binding and IgG4-binding.

The protein belongs to the SXP/RAL-2 family. As to quaternary structure, monomer. In terms of tissue distribution, excretory gland, ventriculus, and the luminal epithelium of the intestine of the larvae.

The protein resides in the secreted. This is SXP/RAL-2 family protein Ani s 5 from Anisakis simplex (Herring worm).